The sequence spans 422 residues: UDP-N-acetylglucosamine 1-carboxyvinyltransferase (422 aa).

Position 22-23 (22-23 (KN)) interacts with phosphoenolpyruvate. Residue Arg93 participates in UDP-N-acetyl-alpha-D-glucosamine binding. Catalysis depends on Cys117, which acts as the Proton donor. Cys117 bears the 2-(S-cysteinyl)pyruvic acid O-phosphothioketal mark. UDP-N-acetyl-alpha-D-glucosamine is bound by residues 122–126 (RPVDQ), Asp305, and Ile327.

Belongs to the EPSP synthase family. MurA subfamily.

The protein localises to the cytoplasm. The enzyme catalyses phosphoenolpyruvate + UDP-N-acetyl-alpha-D-glucosamine = UDP-N-acetyl-3-O-(1-carboxyvinyl)-alpha-D-glucosamine + phosphate. It participates in cell wall biogenesis; peptidoglycan biosynthesis. Cell wall formation. Adds enolpyruvyl to UDP-N-acetylglucosamine. The polypeptide is UDP-N-acetylglucosamine 1-carboxyvinyltransferase (Bordetella parapertussis (strain 12822 / ATCC BAA-587 / NCTC 13253)).